Reading from the N-terminus, the 102-residue chain is uncharacterized protein (102 aa).

3 residues coordinate [3Fe-4S] cluster: Cys10, Cys16, and Cys55. The interval 66 to 102 is disordered; that stretch reads DAGDDERASADPARSPAEAERHAAKDQRIPGGHDGTV. Over residues 82–93 the composition is skewed to basic and acidic residues; that stretch reads AEAERHAAKDQR.

Requires [3Fe-4S] cluster as cofactor.

In terms of biological role, electron transport protein for the cytochrome systems. This is an uncharacterized protein from Sinorhizobium fredii (strain NBRC 101917 / NGR234).